The primary structure comprises 122 residues: Nitrogen fixation nifHD region GlnB-like protein 2 (122 aa).

The protein belongs to the P(II) protein family.

Its function is as follows. Could be involved in the regulation of nitrogen fixation. The protein is Nitrogen fixation nifHD region GlnB-like protein 2 (glnBB) of Methanobacterium ivanovii.